The following is a 606-amino-acid chain: Sodium-independent sulfate anion transporter (606 aa).

Topologically, residues Met1 to Asp51 are extracellular. A helical transmembrane segment spans residues Phe52–Val72. Position 73 (Ala73) is a topological domain, cytoplasmic. The helical transmembrane segment at Gly74–Leu94 threads the bilayer. Residues Gly95–Val100 lie on the Extracellular side of the membrane. Residues Thr101–Phe117 traverse the membrane as a helical segment. Over His118–Glu119 the chain is Cytoplasmic. Residues Pro120–Leu140 traverse the membrane as a helical segment. At Arg141–Asp147 the chain is on the extracellular side. Residues Phe148–Gly168 form a helical membrane-spanning segment. At Gln169 to Thr197 the chain is on the cytoplasmic side. Residues Arg198–Met218 traverse the membrane as a helical segment. Residues Arg219–Leu250 are Extracellular-facing. Residues Val251 to Ile271 traverse the membrane as a helical segment. Residues Leu272 to Gly307 are Cytoplasmic-facing. A helical membrane pass occupies residues Ala308 to Phe328. Residues Ala329–Glu341 lie on the Extracellular side of the membrane. A helical membrane pass occupies residues Leu342–Gly362. The Cytoplasmic portion of the chain corresponds to Ser363 to Gly374. A helical membrane pass occupies residues Val375–Leu395. Residues Thr396–Leu398 are Extracellular-facing. The chain crosses the membrane as a helical span at residues Phe399–Phe419. Residues Asp420 to Thr441 lie on the Cytoplasmic side of the membrane. A helical transmembrane segment spans residues Phe442 to Leu462. The Extracellular portion of the chain corresponds to Met463–Ala606. An STAS domain is found at Arg470–Pro584.

Belongs to the SLC26A/SulP transporter (TC 2.A.53) family. Detected in all tissues tested with highest expression observed in brain, kidney, HEVEC and placenta and lowest in pancreas, skeletal muscle, liver, lung and heart.

The protein localises to the cell membrane. The protein resides in the lysosome membrane. It localises to the apical cell membrane. It is found in the basolateral cell membrane. It catalyses the reaction hydrogencarbonate(in) + chloride(out) = hydrogencarbonate(out) + chloride(in). It carries out the reaction sulfate(in) + H(+)(in) = sulfate(out) + H(+)(out). The catalysed reaction is oxalate(in) + chloride(out) = oxalate(out) + chloride(in). Sodium-independent anion exchanger mediating bicarbonate, chloride, sulfate and oxalate transport. Exhibits sodium-independent sulfate anion transporter activity that may cooperate with SLC26A2 to mediate DIDS-sensitive sulfate uptake into high endothelial venules endothelial cells (HEVEC). In the kidney, mediates chloride-bicarbonate exchange, facilitating V-ATPase-mediated acid secretion. May function as a chloride channel, playing an important role in moderating chloride homeostasis and neuronal activity in the cerebellum. This chain is Sodium-independent sulfate anion transporter, found in Homo sapiens (Human).